A 342-amino-acid polypeptide reads, in one-letter code: Probable dual-specificity RNA methyltransferase RlmN (342 aa).

Glutamate 91 (proton acceptor) is an active-site residue. Positions 97-327 constitute a Radical SAM core domain; sequence YRYGNTVCLS…VTVRRELGDE (231 aa). A disulfide bridge connects residues cysteine 104 and cysteine 332. Cysteine 111, cysteine 115, and cysteine 118 together coordinate [4Fe-4S] cluster. Residues 158–159, serine 190, 213–215, and asparagine 289 contribute to the S-adenosyl-L-methionine site; these read GE and SLH. The active-site S-methylcysteine intermediate is the cysteine 332.

Belongs to the radical SAM superfamily. RlmN family. [4Fe-4S] cluster is required as a cofactor.

The protein localises to the cytoplasm. The catalysed reaction is adenosine(2503) in 23S rRNA + 2 reduced [2Fe-2S]-[ferredoxin] + 2 S-adenosyl-L-methionine = 2-methyladenosine(2503) in 23S rRNA + 5'-deoxyadenosine + L-methionine + 2 oxidized [2Fe-2S]-[ferredoxin] + S-adenosyl-L-homocysteine. It catalyses the reaction adenosine(37) in tRNA + 2 reduced [2Fe-2S]-[ferredoxin] + 2 S-adenosyl-L-methionine = 2-methyladenosine(37) in tRNA + 5'-deoxyadenosine + L-methionine + 2 oxidized [2Fe-2S]-[ferredoxin] + S-adenosyl-L-homocysteine. Its function is as follows. Specifically methylates position 2 of adenine 2503 in 23S rRNA and position 2 of adenine 37 in tRNAs. The protein is Probable dual-specificity RNA methyltransferase RlmN of Carboxydothermus hydrogenoformans (strain ATCC BAA-161 / DSM 6008 / Z-2901).